Here is a 228-residue protein sequence, read N- to C-terminus: UPF0758 protein STER_1430 (228 aa).

The 123-residue stretch at Q103 to D225 folds into the MPN domain. Zn(2+)-binding residues include H174, H176, and D187. Positions H174 to D187 match the JAMM motif motif.

It belongs to the UPF0758 family.

The chain is UPF0758 protein STER_1430 from Streptococcus thermophilus (strain ATCC BAA-491 / LMD-9).